Consider the following 296-residue polypeptide: Protoheme IX farnesyltransferase (296 aa).

9 helical membrane-spanning segments follow: residues 9–29 (VTKP…FLLA), 36–56 (YPLF…GCVF), 75–95 (VLVK…VLGI), 99–119 (LLLY…GFVI), 133–153 (VYGT…GYCA), 163–183 (LILL…IAIF), 209–229 (ITLY…SGYA), 234–254 (LVVA…GYKA), and 265–285 (FVFS…DFNV).

It belongs to the UbiA prenyltransferase family. Protoheme IX farnesyltransferase subfamily.

The protein localises to the cell inner membrane. The enzyme catalyses heme b + (2E,6E)-farnesyl diphosphate + H2O = Fe(II)-heme o + diphosphate. It participates in porphyrin-containing compound metabolism; heme O biosynthesis; heme O from protoheme: step 1/1. Converts heme B (protoheme IX) to heme O by substitution of the vinyl group on carbon 2 of heme B porphyrin ring with a hydroxyethyl farnesyl side group. In Yersinia pestis bv. Antiqua (strain Antiqua), this protein is Protoheme IX farnesyltransferase.